The primary structure comprises 466 residues: L-seryl-tRNA(Sec) selenium transferase (466 aa).

Residue K294 is modified to N6-(pyridoxal phosphate)lysine.

It belongs to the SelA family. Requires pyridoxal 5'-phosphate as cofactor.

The protein resides in the cytoplasm. It catalyses the reaction L-seryl-tRNA(Sec) + selenophosphate + H(+) = L-selenocysteinyl-tRNA(Sec) + phosphate. The protein operates within aminoacyl-tRNA biosynthesis; selenocysteinyl-tRNA(Sec) biosynthesis; selenocysteinyl-tRNA(Sec) from L-seryl-tRNA(Sec) (bacterial route): step 1/1. In terms of biological role, converts seryl-tRNA(Sec) to selenocysteinyl-tRNA(Sec) required for selenoprotein biosynthesis. This chain is L-seryl-tRNA(Sec) selenium transferase, found in Carboxydothermus hydrogenoformans (strain ATCC BAA-161 / DSM 6008 / Z-2901).